Consider the following 1347-residue polypeptide: Protocadherin-11 X-linked (1347 aa).

The first 23 residues, 1–23 (MDLLSGTYIFAVLLACVVFHSGA), serve as a signal peptide directing secretion. Over 24 to 812 (QEKNYTIREE…VSSPTNDYVK (789 aa)) the chain is Extracellular. Cadherin domains are found at residues 26–139 (KNYT…APLF), 140–249 (PATV…HPVF), 250–355 (KETE…VPSI), 362–466 (NPVN…APVF), 467–570 (TQSF…SPVF), 571–673 (THNE…KPVF), and 677–795 (PSNY…APVT). N27, N48, and N54 each carry an N-linked (GlcNAc...) asparagine glycan. N344 is a glycosylation site (N-linked (GlcNAc...) asparagine). N553 carries N-linked (GlcNAc...) asparagine glycosylation. N773 carries an N-linked (GlcNAc...) asparagine glycan. A helical membrane pass occupies residues 813–833 (ILVAAVAGTITVVVVIFITAV). Over 834–1347 (VRCRQAPHLK…DSPIMEEHPL (514 aa)) the chain is Cytoplasmic. Disordered regions lie at residues 1057 to 1091 (LPEG…GYPQ), 1097 to 1116 (RATP…ESTF), and 1326 to 1347 (FTPR…EHPL).

It localises to the cell membrane. Its function is as follows. Potential calcium-dependent cell-adhesion protein. The protein is Protocadherin-11 X-linked (PCDH11X) of Gorilla gorilla gorilla (Western lowland gorilla).